Here is a 338-residue protein sequence, read N- to C-terminus: Tagatose 1,6-diphosphate aldolase (338 aa).

Belongs to the aldolase LacD family.

The enzyme catalyses D-tagatofuranose 1,6-bisphosphate = D-glyceraldehyde 3-phosphate + dihydroxyacetone phosphate. It participates in carbohydrate metabolism; D-tagatose 6-phosphate degradation; D-glyceraldehyde 3-phosphate and glycerone phosphate from D-tagatose 6-phosphate: step 2/2. In Listeria innocua serovar 6a (strain ATCC BAA-680 / CLIP 11262), this protein is Tagatose 1,6-diphosphate aldolase.